The chain runs to 302 residues: Sulfate adenylyltransferase subunit 2 (302 aa).

It belongs to the PAPS reductase family. CysD subfamily. In terms of assembly, heterodimer composed of CysD, the smaller subunit, and CysN.

It catalyses the reaction sulfate + ATP + H(+) = adenosine 5'-phosphosulfate + diphosphate. It participates in sulfur metabolism; hydrogen sulfide biosynthesis; sulfite from sulfate: step 1/3. In terms of biological role, with CysN forms the ATP sulfurylase (ATPS) that catalyzes the adenylation of sulfate producing adenosine 5'-phosphosulfate (APS) and diphosphate, the first enzymatic step in sulfur assimilation pathway. APS synthesis involves the formation of a high-energy phosphoric-sulfuric acid anhydride bond driven by GTP hydrolysis by CysN coupled to ATP hydrolysis by CysD. The chain is Sulfate adenylyltransferase subunit 2 from Buchnera aphidicola subsp. Acyrthosiphon pisum (strain 5A).